Consider the following 693-residue polypeptide: MLPARLACGLLCGLRRGPAPAAACYGPARWLLEGKCEVPIRQRASSLGRRVPPSSTATEDYAEGPDTEERFLFPEYVPERTPEEQVRELQELRELQQLQQEKERERLQQREERLQQKLRAGFRTLPVPEFPDASVPPSGIYCSGCGAELHCQHPGLPGYLPEEKFRDAAQAEGGPARTVCQRCWLLVHHGRALRLQVSRDQYLELVSAALRRPGPALVLYMVNLLDLPDALLPDLPKLVGPKQLIVLGNKVDLLPQDAPGYLKRLRKRLWDDCIRAGLVVAPGHQGPQYPAGDEPLEEIKNQNPSSRSRTVVKDVRLISAKTGYGVEEMISALQRSWRYRGDVYLVGTTNAGKSTLFNTLLESDYCTAKGSEAIDRATISPWPGTTLNLLKFPICNPTPYRMFKRQRRLQEDATKAEEDLSEEEQSQLNQLKKHGYIVGRVGRTFSYSREQDEVPFEFDADSLAFDMGSEPVVSVCKSTKQIELTPEDVKDAHWFYDTPGITKESCILNLLTEKEINTVLPTHSIIPRTFVLKPGMVLFLGGIARIDFLQGNQSAWFTVVASNFLPVHITSLDKADALYEKHAGHELLLVPMGGKERMAQFPPLVAEDITLKGGGKFEAVADIKFSSAGWVAVTPYSEGTLHLRGHTPEGTALTVHPPVLPYIVNVKGQRMKKSVAYKTKKPPSLVHNLKKHR.

The tract at residues R43 to T67 is disordered. Y76 is subject to Phosphotyrosine. The region spanning L203–E504 is the CP-type G domain. Residues G286–R307 form a disordered region.

This sequence belongs to the TRAFAC class YlqF/YawG GTPase family. NOA1 subfamily. As to quaternary structure, homodimer or multimer. Interacts with mitochondrial complex I, DAP3, MRPL12 and MRPS27. Expressed in tissues associated with high mitochondria content including testes, heart, liver, brain and thymus. Also expressed in various bone cell lines.

The protein localises to the mitochondrion inner membrane. Functionally, involved in regulation of mitochondrial protein translation and respiration. Plays a role in mitochondria-mediated cell death. May act as a scaffolding protein or stabilizer of respiratory chain supercomplexes. Binds GTP. The chain is Nitric oxide-associated protein 1 (Noa1) from Mus musculus (Mouse).